The chain runs to 289 residues: Serine/threonine-protein phosphatase Pgam5, mitochondrial (289 aa).

Residues 7-23 (FACGTGAGLAAYYLQRL) form a helical membrane-spanning segment.

It belongs to the phosphoglycerate mutase family. BPG-dependent PGAM subfamily. As to quaternary structure, interacts with Pk92B/ASK1.

It is found in the mitochondrion outer membrane. The catalysed reaction is O-phospho-L-seryl-[protein] + H2O = L-seryl-[protein] + phosphate. The enzyme catalyses O-phospho-L-threonyl-[protein] + H2O = L-threonyl-[protein] + phosphate. In terms of biological role, displays phosphatase activity for serine/threonine residues, and dephosphorylates and activates Pk92B kinase. Has apparently no phosphoglycerate mutase activity. The sequence is that of Serine/threonine-protein phosphatase Pgam5, mitochondrial from Drosophila sechellia (Fruit fly).